An 80-amino-acid chain; its full sequence is U19-lycotoxin-Ls1a (80 aa).

Positions 1–22 (MSPKVQALIFIVGLITLLAAHA) are cleaved as a signal peptide. The propeptide occupies 23 to 34 (QEELSDNIESER). 4 disulfides stabilise this stretch: cysteine 36/cysteine 50, cysteine 43/cysteine 55, cysteine 49/cysteine 66, and cysteine 57/cysteine 64.

Belongs to the neurotoxin 02 (plectoxin) family. 05 (U19-lycotoxin) subfamily. Expressed by the venom gland.

It is found in the secreted. This is U19-lycotoxin-Ls1a from Lycosa singoriensis (Wolf spider).